A 76-amino-acid chain; its full sequence is KANTR integral membrane protein (76 aa).

The N-terminal stretch at 1 to 25 (MSPFSLLILVICAFSLFFLINLTRG) is a signal peptide. Over 26–34 (LSILLVFSK) the chain is Extracellular. The helical transmembrane segment at 35-55 (NQLLALLLLSIVSLFSISLIS) threads the bilayer. Topologically, residues 56 to 76 (ALIFFDLLPSTFFGFILLFFF) are cytoplasmic.

It localises to the membrane. The chain is KANTR integral membrane protein from Homo sapiens (Human).